Consider the following 210-residue polypeptide: Uridine kinase (210 aa).

14 to 21 (GGSGSGKT) is a binding site for ATP.

This sequence belongs to the uridine kinase family.

The protein localises to the cytoplasm. The enzyme catalyses uridine + ATP = UMP + ADP + H(+). It carries out the reaction cytidine + ATP = CMP + ADP + H(+). It participates in pyrimidine metabolism; CTP biosynthesis via salvage pathway; CTP from cytidine: step 1/3. Its pathway is pyrimidine metabolism; UMP biosynthesis via salvage pathway; UMP from uridine: step 1/1. This chain is Uridine kinase, found in Deinococcus radiodurans (strain ATCC 13939 / DSM 20539 / JCM 16871 / CCUG 27074 / LMG 4051 / NBRC 15346 / NCIMB 9279 / VKM B-1422 / R1).